The sequence spans 258 residues: Small ribosomal subunit protein uS2 (258 aa).

This sequence belongs to the universal ribosomal protein uS2 family.

The chain is Small ribosomal subunit protein uS2 from Leuconostoc mesenteroides subsp. mesenteroides (strain ATCC 8293 / DSM 20343 / BCRC 11652 / CCM 1803 / JCM 6124 / NCDO 523 / NBRC 100496 / NCIMB 8023 / NCTC 12954 / NRRL B-1118 / 37Y).